A 534-amino-acid polypeptide reads, in one-letter code: Bifunctional purine biosynthesis protein PurH (534 aa).

The region spanning Thr-6–Val-151 is the MGS-like domain.

It belongs to the PurH family.

The enzyme catalyses (6R)-10-formyltetrahydrofolate + 5-amino-1-(5-phospho-beta-D-ribosyl)imidazole-4-carboxamide = 5-formamido-1-(5-phospho-D-ribosyl)imidazole-4-carboxamide + (6S)-5,6,7,8-tetrahydrofolate. The catalysed reaction is IMP + H2O = 5-formamido-1-(5-phospho-D-ribosyl)imidazole-4-carboxamide. Its pathway is purine metabolism; IMP biosynthesis via de novo pathway; 5-formamido-1-(5-phospho-D-ribosyl)imidazole-4-carboxamide from 5-amino-1-(5-phospho-D-ribosyl)imidazole-4-carboxamide (10-formyl THF route): step 1/1. It participates in purine metabolism; IMP biosynthesis via de novo pathway; IMP from 5-formamido-1-(5-phospho-D-ribosyl)imidazole-4-carboxamide: step 1/1. This Stutzerimonas stutzeri (strain A1501) (Pseudomonas stutzeri) protein is Bifunctional purine biosynthesis protein PurH.